We begin with the raw amino-acid sequence, 86 residues long: Small ribosomal subunit protein uS17 (86 aa).

Belongs to the universal ribosomal protein uS17 family. Part of the 30S ribosomal subunit.

Functionally, one of the primary rRNA binding proteins, it binds specifically to the 5'-end of 16S ribosomal RNA. In Helicobacter pylori (strain P12), this protein is Small ribosomal subunit protein uS17.